Reading from the N-terminus, the 191-residue chain is ATP-dependent dethiobiotin synthetase BioD 2 (191 aa).

An ATP-binding site is contributed by 13–18 (DVGKTI). Thr-17 contributes to the Mg(2+) binding site. Residue Lys-38 is part of the active site. Thr-42 serves as a coordination point for substrate. Residues Asp-50 and 115–118 (EGAG) contribute to the ATP site. 2 residues coordinate Mg(2+): Asp-50 and Glu-115.

It belongs to the dethiobiotin synthetase family. As to quaternary structure, homodimer. Requires Mg(2+) as cofactor.

The protein resides in the cytoplasm. The enzyme catalyses (7R,8S)-7,8-diammoniononanoate + CO2 + ATP = (4R,5S)-dethiobiotin + ADP + phosphate + 3 H(+). The protein operates within cofactor biosynthesis; biotin biosynthesis; biotin from 7,8-diaminononanoate: step 1/2. Its function is as follows. Catalyzes a mechanistically unusual reaction, the ATP-dependent insertion of CO2 between the N7 and N8 nitrogen atoms of 7,8-diaminopelargonic acid (DAPA, also called 7,8-diammoniononanoate) to form a ureido ring. This is ATP-dependent dethiobiotin synthetase BioD 2 from Haemophilus influenzae (strain ATCC 51907 / DSM 11121 / KW20 / Rd).